We begin with the raw amino-acid sequence, 678 residues long: Methionine--tRNA ligase (678 aa).

Positions 12–22 match the 'HIGH' region motif; the sequence is PYANGPIHLGH. Cysteine 143, cysteine 146, cysteine 156, and cysteine 159 together coordinate Zn(2+). The 'KMSKS' region signature appears at 328-332; the sequence is KMSKS. Lysine 331 contributes to the ATP binding site. A tRNA-binding domain is found at 577-678; it reads DFSKVDLRIA…SGAQPGMRVK (102 aa).

It belongs to the class-I aminoacyl-tRNA synthetase family. MetG type 1 subfamily. Homodimer. Zn(2+) is required as a cofactor.

It localises to the cytoplasm. It carries out the reaction tRNA(Met) + L-methionine + ATP = L-methionyl-tRNA(Met) + AMP + diphosphate. Is required not only for elongation of protein synthesis but also for the initiation of all mRNA translation through initiator tRNA(fMet) aminoacylation. The polypeptide is Methionine--tRNA ligase (Acidithiobacillus ferrooxidans (strain ATCC 23270 / DSM 14882 / CIP 104768 / NCIMB 8455) (Ferrobacillus ferrooxidans (strain ATCC 23270))).